We begin with the raw amino-acid sequence, 639 residues long: UvrABC system protein C (639 aa).

The GIY-YIG domain maps to 31–109 (EQAGVYRMYD…IKKYQPKYNI (79 aa)). One can recognise a UVR domain in the interval 218-253 (SAVIEQLVARMELASNELHFELAAKYRDQIVTLRKV).

This sequence belongs to the UvrC family. As to quaternary structure, interacts with UvrB in an incision complex.

It localises to the cytoplasm. Functionally, the UvrABC repair system catalyzes the recognition and processing of DNA lesions. UvrC both incises the 5' and 3' sides of the lesion. The N-terminal half is responsible for the 3' incision and the C-terminal half is responsible for the 5' incision. The polypeptide is UvrABC system protein C (Colwellia psychrerythraea (strain 34H / ATCC BAA-681) (Vibrio psychroerythus)).